The primary structure comprises 365 residues: Phospho-N-acetylmuramoyl-pentapeptide-transferase (365 aa).

Helical transmembrane passes span 22–42 (YISVRIIMISITSLLITLALG), 74–94 (TMGGVLILSSVIISCLLWGDL), 95–115 (TSIYLWILILVVIFFGAIGFF), 134–154 (KFALQSIFSIVLAIVLFYLLS), 168–188 (SLYIPMGIVIFVVLAFFIING), 201–221 (GLAIVPVVLVAAGLGIYAYIE), 240–260 (LAEVAVFCAAVCGSGLAFLWF), 267–287 (VFMGDVGSLTLGAVLGVIAVM), 292–312 (LIFFIMGLLFVVEALSVMLQV), and 342–362 (KVVIRFWIISLILFLIGLAAI).

This sequence belongs to the glycosyltransferase 4 family. MraY subfamily. Mg(2+) serves as cofactor.

It is found in the cell inner membrane. It carries out the reaction UDP-N-acetyl-alpha-D-muramoyl-L-alanyl-gamma-D-glutamyl-meso-2,6-diaminopimeloyl-D-alanyl-D-alanine + di-trans,octa-cis-undecaprenyl phosphate = di-trans,octa-cis-undecaprenyl diphospho-N-acetyl-alpha-D-muramoyl-L-alanyl-D-glutamyl-meso-2,6-diaminopimeloyl-D-alanyl-D-alanine + UMP. The protein operates within cell wall biogenesis; peptidoglycan biosynthesis. Functionally, catalyzes the initial step of the lipid cycle reactions in the biosynthesis of the cell wall peptidoglycan: transfers peptidoglycan precursor phospho-MurNAc-pentapeptide from UDP-MurNAc-pentapeptide onto the lipid carrier undecaprenyl phosphate, yielding undecaprenyl-pyrophosphoryl-MurNAc-pentapeptide, known as lipid I. The chain is Phospho-N-acetylmuramoyl-pentapeptide-transferase from Francisella tularensis subsp. mediasiatica (strain FSC147).